We begin with the raw amino-acid sequence, 328 residues long: Ferredoxin--NADP reductase (328 aa).

FAD is bound by residues glutamate 36, glutamine 44, tyrosine 49, valine 89, phenylalanine 123, aspartate 284, and threonine 324.

The protein belongs to the ferredoxin--NADP reductase type 2 family. Homodimer. Requires FAD as cofactor.

It carries out the reaction 2 reduced [2Fe-2S]-[ferredoxin] + NADP(+) + H(+) = 2 oxidized [2Fe-2S]-[ferredoxin] + NADPH. This is Ferredoxin--NADP reductase from Lacticaseibacillus paracasei (strain ATCC 334 / BCRC 17002 / CCUG 31169 / CIP 107868 / KCTC 3260 / NRRL B-441) (Lactobacillus paracasei).